The following is a 368-amino-acid chain: tRNA-specific 2-thiouridylase MnmA (368 aa).

ATP contacts are provided by residues 6–13 and Met-32; that span reads ALSGGVDS. Residue Cys-92 is the Nucleophile of the active site. A disulfide bridge connects residues Cys-92 and Cys-186. Gly-116 serves as a coordination point for ATP. Residues 134-136 are interaction with tRNA; the sequence is KDQ. The active-site Cysteine persulfide intermediate is the Cys-186. The tract at residues 292 to 293 is interaction with tRNA; sequence RY.

Belongs to the MnmA/TRMU family.

It is found in the cytoplasm. It carries out the reaction S-sulfanyl-L-cysteinyl-[protein] + uridine(34) in tRNA + AH2 + ATP = 2-thiouridine(34) in tRNA + L-cysteinyl-[protein] + A + AMP + diphosphate + H(+). Its function is as follows. Catalyzes the 2-thiolation of uridine at the wobble position (U34) of tRNA, leading to the formation of s(2)U34. The chain is tRNA-specific 2-thiouridylase MnmA from Campylobacter hominis (strain ATCC BAA-381 / DSM 21671 / CCUG 45161 / LMG 19568 / NCTC 13146 / CH001A).